We begin with the raw amino-acid sequence, 562 residues long: Dihydroxy-acid dehydratase (562 aa).

Cys55 contributes to the [2Fe-2S] cluster binding site. Asp87 contacts Mg(2+). A [2Fe-2S] cluster-binding site is contributed by Cys128. 2 residues coordinate Mg(2+): Asp129 and Lys130. Position 130 is an N6-carboxylysine (Lys130). Residue Cys200 coordinates [2Fe-2S] cluster. Glu451 is a binding site for Mg(2+). The Proton acceptor role is filled by Ser477.

Belongs to the IlvD/Edd family. In terms of assembly, homodimer. The cofactor is [2Fe-2S] cluster. It depends on Mg(2+) as a cofactor.

The enzyme catalyses (2R)-2,3-dihydroxy-3-methylbutanoate = 3-methyl-2-oxobutanoate + H2O. It carries out the reaction (2R,3R)-2,3-dihydroxy-3-methylpentanoate = (S)-3-methyl-2-oxopentanoate + H2O. Its pathway is amino-acid biosynthesis; L-isoleucine biosynthesis; L-isoleucine from 2-oxobutanoate: step 3/4. The protein operates within amino-acid biosynthesis; L-valine biosynthesis; L-valine from pyruvate: step 3/4. Functionally, functions in the biosynthesis of branched-chain amino acids. Catalyzes the dehydration of (2R,3R)-2,3-dihydroxy-3-methylpentanoate (2,3-dihydroxy-3-methylvalerate) into 2-oxo-3-methylpentanoate (2-oxo-3-methylvalerate) and of (2R)-2,3-dihydroxy-3-methylbutanoate (2,3-dihydroxyisovalerate) into 2-oxo-3-methylbutanoate (2-oxoisovalerate), the penultimate precursor to L-isoleucine and L-valine, respectively. This is Dihydroxy-acid dehydratase from Cytophaga hutchinsonii (strain ATCC 33406 / DSM 1761 / CIP 103989 / NBRC 15051 / NCIMB 9469 / D465).